Here is a 167-residue protein sequence, read N- to C-terminus: Respiratory supercomplex factor 1-A, mitochondrial (167 aa).

The HIG1 domain maps to 1–86; the sequence is MCSDFEEETS…TERKQRREFE (86 aa). The next 2 helical transmembrane spans lie at 21–38 and 53–75; these read EPLI…LYRA and MFRA…GMYY. Residues 75 to 107 adopt a coiled-coil conformation; sequence YKTERKQRREFEKKVEERKAQEKRDAWLRELEA.

Belongs to the RCF1 family. Associates with the respiratory chain complex III/complex IV supercomplex.

The protein resides in the mitochondrion membrane. In terms of biological role, cytochrome c oxidase subunit which plays a role in assembly of respiratory supercomplexes. The chain is Respiratory supercomplex factor 1-A, mitochondrial (rcf1-A) from Talaromyces marneffei (strain ATCC 18224 / CBS 334.59 / QM 7333) (Penicillium marneffei).